Reading from the N-terminus, the 400-residue chain is Glycerol-3-phosphate dehydrogenase [NAD(+)] 1, chloroplastic (400 aa).

Residues 1–32 (MRFRSFFFSSSIFSLSHSRSPSLSSSRFSSLS) constitute a chloroplast transit peptide. Residues 61–66 (GSGNWG), F92, F149, K172, and A205 contribute to the NAD(+) site. K172 contributes to the substrate binding site. Catalysis depends on K257, which acts as the Proton acceptor. NAD(+) contacts are provided by R321, K350, and Q352. A substrate-binding site is contributed by 321 to 322 (RN).

Belongs to the NAD-dependent glycerol-3-phosphate dehydrogenase family. As to expression, expressed in young seedlings, flowers and siliques. Expressed at low levels in roots.

The protein localises to the plastid. It is found in the chloroplast. The catalysed reaction is sn-glycerol 3-phosphate + NAD(+) = dihydroxyacetone phosphate + NADH + H(+). Its pathway is membrane lipid metabolism; glycerophospholipid metabolism. In terms of biological role, involved in glycerolipid metabolism. The sequence is that of Glycerol-3-phosphate dehydrogenase [NAD(+)] 1, chloroplastic (DHAPRD) from Arabidopsis thaliana (Mouse-ear cress).